A 387-amino-acid chain; its full sequence is Cystathionine gamma-lyase (387 aa).

The substrate site is built by Arg-53, Tyr-105, and Arg-110. N6-(pyridoxal phosphate)lysine is present on Lys-202. Glu-329 is a binding site for substrate.

It belongs to the trans-sulfuration enzymes family. In terms of assembly, homotetramer. Interacts with CALM in a calcium-dependent manner. Pyridoxal 5'-phosphate is required as a cofactor.

It localises to the cytoplasm. It catalyses the reaction L,L-cystathionine + H2O = 2-oxobutanoate + L-cysteine + NH4(+). The catalysed reaction is L-cysteine + H2O = hydrogen sulfide + pyruvate + NH4(+) + H(+). It carries out the reaction L-homocysteine + H2O = 2-oxobutanoate + hydrogen sulfide + NH4(+) + H(+). The enzyme catalyses L-homoserine = 2-oxobutanoate + NH4(+). The protein operates within amino-acid biosynthesis; L-cysteine biosynthesis; L-cysteine from L-homocysteine and L-serine: step 2/2. Catalyzes the last step in the trans-sulfuration pathway from L-methionine to L-cysteine in a pyridoxal-5'-phosphate (PLP)-dependent manner, which consists on cleaving the L,L-cystathionine molecule into L-cysteine, ammonia and 2-oxobutanoate. Part of the L-cysteine derived from the trans-sulfuration pathway is utilized for biosynthesis of the ubiquitous antioxidant glutathione. Besides its role in the conversion of L-cystathionine into L-cysteine, it utilizes L-cysteine and L-homocysteine as substrates (at much lower rates than L,L-cystathionine) to produce the endogenous gaseous signaling molecule hydrogen sulfide (H2S). This chain is Cystathionine gamma-lyase (cysA), found in Dictyostelium discoideum (Social amoeba).